An 82-amino-acid polypeptide reads, in one-letter code: Protein C2 (82 aa).

This is Protein C2 (C2) from Sterkiella nova (Ciliate).